We begin with the raw amino-acid sequence, 381 residues long: MALNIRKTHPLLKIVNQTLIDLPAPSNISIWWNFGSLLGLCLIIQIVTGLFLAMHYTADISLAFSSVIHICRDVNYGWLIRNIHANGASLFFVCVYIHIARGLYYGSYLYKETWNIGVILLFLLMATAFVGYVLPWGQMSFWGATVITNLLSAFPYIGDTLVQWIWGGFSVDNATLTRFFAFHFLLPFLITALMVIHVLFLHETGSNNPMGLNSDMDKISFHPYFSYKDALGFLTLLILLGALALFLPNLLGDAENFIPANPLVTPPHIKPEWYFLFAYAILRSIPNKLGGVLALLFSILILLLVPLLHTSKQRSSTFRPLTQVFFWILVTNMLVLTWIGGQPVEQPFILIGQIASITYFSLFLIAMPLAGWWENKILSLN.

The next 4 membrane-spanning stretches (helical) occupy residues phenylalanine 34–methionine 54, tryptophan 78–isoleucine 99, tryptophan 114–leucine 134, and phenylalanine 179–leucine 199. Heme b is bound by residues histidine 84 and histidine 98. Residues histidine 183 and histidine 197 each contribute to the heme b site. A ubiquinone is bound at residue histidine 202. Helical transmembrane passes span tyrosine 227–leucine 247, leucine 289–histidine 309, leucine 321–glycine 341, and phenylalanine 348–proline 368.

It belongs to the cytochrome b family. In terms of assembly, the cytochrome bc1 complex contains 3 respiratory subunits (MT-CYB, CYC1 and UQCRFS1), 2 core proteins (UQCRC1 and UQCRC2) and probably 6 low-molecular weight proteins. Heme b is required as a cofactor.

It is found in the mitochondrion inner membrane. Functionally, component of the ubiquinol-cytochrome c reductase complex (complex III or cytochrome b-c1 complex) that is part of the mitochondrial respiratory chain. The b-c1 complex mediates electron transfer from ubiquinol to cytochrome c. Contributes to the generation of a proton gradient across the mitochondrial membrane that is then used for ATP synthesis. The polypeptide is Cytochrome b (mt-cyb) (Isurus paucus (Longfin mako shark)).